Reading from the N-terminus, the 448-residue chain is Death-associated protein kinase 3 (448 aa).

Positions 13 to 275 (YEMGEELGSG…IAQSLEHSWI (263 aa)) constitute a Protein kinase domain. ATP is bound by residues 19-27 (LGSGQFAIV) and lysine 42. Aspartate 139 functions as the Proton acceptor in the catalytic mechanism. An activation segment region spans residues 161–204 (DFGIAHRIEAGSEFKNIFGTPEFVAPEIVNYEPLGLEADMWSIG). Residues threonine 180 and threonine 225 each carry the phosphothreonine modification. Threonine 265 carries the post-translational modification Phosphothreonine; by autocatalysis. The residue at position 265 (threonine 265) is a Phosphothreonine; by ROCK1. Serine 304 is subject to Phosphoserine; by DAPK1. Residue serine 306 is modified to Phosphoserine; by autocatalysis and DAPK1. 3 positions are modified to phosphoserine; by DAPK1: serine 307, serine 313, and serine 321. The tract at residues 390-448 (AQEEARAALLGAGGLKRRLCRLENRYDALAAQVAAEVQFVRDLVRALEQERLQAECGVR) is interaction with CDC5L. The tract at residues 418–448 (LAAQVAAEVQFVRDLVRALEQERLQAECGVR) is required for interaction with ATF4 but not with PAWR. Positions 422-436 (VAAEVQFVRDLVRAL) are leucine-zipper.

It belongs to the protein kinase superfamily. CAMK Ser/Thr protein kinase family. DAP kinase subfamily. In terms of assembly, homooligomer in its kinase-active form (homotrimers and homodimers are reported); monomeric in its kinase-inactive form. Homodimerization is required for activation segment autophosphorylation. Interacts with DAXX, ATF4, NLK, TCF7L2, UBE2D1, UBE2D2, UBE2D3 and CDC5L. Interacts with PAWR; also demonstrated in aorta smooth muscle cells indicative for the cytoskeletal targeting function of PAWR. Interacts with AR; enhanced by AATF. Interacts with LUZP1; the interaction is likely to occur throughout the cell cycle and reduces the LUZP1-mediated suppression of MYL9 phosphorylation. Mg(2+) is required as a cofactor. Post-translationally, ubiquitinated. Ubiquitination mediated by the UBE2D3 E3 ligase does not lead to proteasomal degradation, but influences promyelocytic leukemia protein nuclear bodies (PML-NBs) formation in the nucleus. The phosphorylation status is critical for kinase activity, oligomerization and intracellular localization. Phosphorylation at Thr-180, Thr-225 and Thr-265 is essential for activity. The phosphorylated form is localized in the cytoplasm and nuclear translocation or retention is maximal when it is not phosphorylated. Phosphorylation increases the trimeric form, and its dephosphorylation favors a kinase-inactive monomeric form. In terms of tissue distribution, ubiquitously expressed in all tissue types examined. High levels in brain, heart, lung and spleen, lower expression in kidney, liver, skeletal muscle and testis. Isoform 2 is expressed in the smooth muscle.

The protein resides in the nucleus. It is found in the PML body. The protein localises to the cytoplasm. Its subcellular location is the cytoskeleton. It localises to the microtubule organizing center. The protein resides in the chromosome. It is found in the centromere. The protein localises to the spindle. Its subcellular location is the midbody. It carries out the reaction L-seryl-[protein] + ATP = O-phospho-L-seryl-[protein] + ADP + H(+). The catalysed reaction is L-threonyl-[protein] + ATP = O-phospho-L-threonyl-[protein] + ADP + H(+). Its activity is regulated as follows. A sequential activation is proposed: autophosphorylation at consensus sites is leading to dimerization of the catalytic domain and activation segment exchange (producing an active confirmation of both kinase modules in trans) followed by phosphorylation at Thr-180 in the activation segment and at other regulatory sites. Phosphorylation at Thr-180, Thr-225 and Thr-265 is essential for activity. Inhibited by pyridone 6 (K00225), a potent, ATP-competitive inhibitor. Phosphorylation at Thr-180, Thr-225 and Thr-265 is essential for activity. Functionally, serine/threonine kinase which is involved in the regulation of apoptosis, autophagy, transcription, translation and actin cytoskeleton reorganization. Regulates both type I (caspase-dependent) apoptotic and type II (caspase-independent) autophagic cell deaths signal, depending on the cellular setting. Involved in formation of promyelocytic leukemia protein nuclear body (PML-NB). Involved in apoptosis involving PAWR which mediates cytoplasmic relocation; in vitro phosphorylates PAWR. Regulates myosin phosphorylation in both smooth muscle and non-muscle cells. In smooth muscle, regulates myosin either directly by phosphorylating MYL12B and MYL9 or through inhibition of smooth muscle myosin phosphatase (SMPP1M) via phosphorylation of PPP1R12A; the inhibition of SMPP1M functions to enhance muscle responsiveness to Ca(2+) and promote a contractile state. Phosphorylates MYL12B in non-muscle cells leading to reorganization of actin cytoskeleton such as in regulation of cell polarity and cell migration. Positively regulates canonical Wnt/beta-catenin signaling through interaction with NLK and TCF7L2; disrupts the NLK-TCF7L2 complex thereby influencing the phosphorylation of TCF7L2 by NLK. Phosphorylates RPL13A on 'Ser-77' upon interferon-gamma activation which is causing RPL13A release from the ribosome, RPL13A association with the GAIT complex and its subsequent involvement in transcript-selective translation inhibition. Phosphorylates STAT3 and enhances its transcriptional activity. Enhances transcription from AR-responsive promoters in a hormone- and kinase-dependent manner. Phosphorylates histone H3 on 'Thr-11' at centromeres during mitosis. The polypeptide is Death-associated protein kinase 3 (Dapk3) (Rattus norvegicus (Rat)).